The chain runs to 330 residues: Fructose-1,6-bisphosphatase class 1 (330 aa).

Residues E84, D103, L105, and D106 each contribute to the Mg(2+) site. Residues 106–109, N196, and K262 contribute to the substrate site; that span reads DGSS. E268 lines the Mg(2+) pocket.

This sequence belongs to the FBPase class 1 family. Homotetramer. It depends on Mg(2+) as a cofactor.

The protein localises to the cytoplasm. The enzyme catalyses beta-D-fructose 1,6-bisphosphate + H2O = beta-D-fructose 6-phosphate + phosphate. Its pathway is carbohydrate biosynthesis; gluconeogenesis. This Shewanella baltica (strain OS185) protein is Fructose-1,6-bisphosphatase class 1.